The following is a 132-amino-acid chain: Small ribosomal subunit protein uS8 (132 aa).

This sequence belongs to the universal ribosomal protein uS8 family. Part of the 30S ribosomal subunit. Contacts proteins S5 and S12.

In terms of biological role, one of the primary rRNA binding proteins, it binds directly to 16S rRNA central domain where it helps coordinate assembly of the platform of the 30S subunit. The protein is Small ribosomal subunit protein uS8 of Streptococcus pyogenes serotype M1.